Consider the following 264-residue polypeptide: Glutamate racemase (264 aa).

Substrate-binding positions include 10–11 (DS) and 42–43 (YG). Cysteine 73 (proton donor/acceptor) is an active-site residue. 74 to 75 (NT) contacts substrate. Cysteine 183 (proton donor/acceptor) is an active-site residue. A substrate-binding site is contributed by 184–185 (TH).

The protein belongs to the aspartate/glutamate racemases family.

It catalyses the reaction L-glutamate = D-glutamate. It functions in the pathway cell wall biogenesis; peptidoglycan biosynthesis. Functionally, provides the (R)-glutamate required for cell wall biosynthesis. The sequence is that of Glutamate racemase from Streptococcus agalactiae serotype Ia (strain ATCC 27591 / A909 / CDC SS700).